Consider the following 608-residue polypeptide: Sensor protein kinase WalK (608 aa).

Helical transmembrane passes span 14-34 and 183-203; these read LVIV…LYFT and IFIV…FFIA. Residues 204–256 form the HAMP domain; sequence RTITKPITDMRNQTVEMSRGNYTQRVKIYGNDEIGELALAFNNLSKRVQEAQA. Residues 261 to 331 form the PAS domain; sequence EKRRLDSVIT…EIQENNDSFL (71 aa). The Zn(2+) site is built by H271, D274, H364, and E368. In terms of domain architecture, PAC spans 314–378; that stretch reads LEDEFKLEEI…QQQVERERRE (65 aa). Residues 382–600 form the Histidine kinase domain; that stretch reads NVSHELRTPL…SIFITLPCEV (219 aa). The residue at position 385 (H385) is a Phosphohistidine; by autocatalysis.

Forms homodimers. Forms homooligomers. Post-translationally, autophosphorylated.

The protein localises to the cell membrane. It catalyses the reaction ATP + protein L-histidine = ADP + protein N-phospho-L-histidine.. With respect to regulation, by zinc. Zinc-binding negatively regulates WalK kinase activity and thus autophosphorylation. In terms of biological role, member of the two-component regulatory system WalK/WalR that regulates genes involved in cell wall metabolism, virulence regulation, biofilm production, oxidative stress resistance and antibiotic resistance via direct or indirect regulation of autolysins. Functions as a sensor protein kinase which is autophosphorylated at a histidine residue in the dimerization domain and transfers its phosphate group to the conserved aspartic acid residue in the regulatory domain of WalR. In turn, WalR binds to the upstream promoter regions of the target genes to positively and negatively regulate their expression. The protein is Sensor protein kinase WalK (walK) of Staphylococcus aureus (strain Newman).